We begin with the raw amino-acid sequence, 280 residues long: Bis(5'-nucleosyl)-tetraphosphatase, symmetrical (280 aa).

It belongs to the Ap4A hydrolase family.

The enzyme catalyses P(1),P(4)-bis(5'-adenosyl) tetraphosphate + H2O = 2 ADP + 2 H(+). In terms of biological role, hydrolyzes diadenosine 5',5'''-P1,P4-tetraphosphate to yield ADP. The protein is Bis(5'-nucleosyl)-tetraphosphatase, symmetrical of Shigella flexneri serotype 5b (strain 8401).